We begin with the raw amino-acid sequence, 287 residues long: Homoserine kinase (287 aa).

78-88 (PLAHGLGSSSS) lines the ATP pocket.

The protein belongs to the GHMP kinase family. Homoserine kinase subfamily.

It is found in the cytoplasm. The enzyme catalyses L-homoserine + ATP = O-phospho-L-homoserine + ADP + H(+). It functions in the pathway amino-acid biosynthesis; L-threonine biosynthesis; L-threonine from L-aspartate: step 4/5. Catalyzes the ATP-dependent phosphorylation of L-homoserine to L-homoserine phosphate. This chain is Homoserine kinase, found in Lactobacillus acidophilus (strain ATCC 700396 / NCK56 / N2 / NCFM).